A 191-amino-acid chain; its full sequence is Ribosome hibernation promotion factor (191 aa).

A disordered region spans residues 100–123 (KQRQEGRPEPLPGPAEAEVNAQGS).

It belongs to the HPF/YfiA ribosome-associated protein family. Long HPF subfamily. Interacts with 100S ribosomes.

Its subcellular location is the cytoplasm. Its function is as follows. Required for dimerization of active 70S ribosomes into 100S ribosomes in stationary phase; 100S ribosomes are translationally inactive and sometimes present during exponential growth. This is Ribosome hibernation promotion factor from Deinococcus radiodurans (strain ATCC 13939 / DSM 20539 / JCM 16871 / CCUG 27074 / LMG 4051 / NBRC 15346 / NCIMB 9279 / VKM B-1422 / R1).